A 55-amino-acid chain; its full sequence is Ferredoxin (55 aa).

2 consecutive 4Fe-4S ferredoxin-type domains span residues 2–27 (YKIT…SESD) and 28–55 (AVRV…IVEG). [4Fe-4S] cluster contacts are provided by Cys-8, Cys-11, Cys-14, Cys-18, Cys-37, Cys-40, Cys-43, and Cys-47.

Requires [4Fe-4S] cluster as cofactor.

In terms of biological role, ferredoxins are iron-sulfur proteins that transfer electrons in a wide variety of metabolic reactions. This chain is Ferredoxin, found in Clostridium sp. (strain M-E).